The following is an 87-amino-acid chain: Cx9C motif-containing protein 4, mitochondrial (87 aa).

The CHCH domain maps to 9-51 (ENACKPFACAIQDCLIENGYNESKCTKAIDNLYKCCKQFYEEN). 2 short sequence motifs (cx9C motif) span residues 12 to 22 (CKPFACAIQDC) and 33 to 43 (CTKAIDNLYKC). Disulfide bonds link C12-C43 and C22-C33.

The protein belongs to the CMC4 family.

It localises to the mitochondrion intermembrane space. This chain is Cx9C motif-containing protein 4, mitochondrial (CMC4), found in Clavispora lusitaniae (strain ATCC 42720) (Yeast).